Here is a 139-residue protein sequence, read N- to C-terminus: Small ribosomal subunit protein bS6 (139 aa).

The tract at residues 118–139 is disordered; it reads SFKGGSKIETPTGSESTDIQEK. A compositionally biased stretch (polar residues) spans 126-139; the sequence is ETPTGSESTDIQEK.

This sequence belongs to the bacterial ribosomal protein bS6 family.

Functionally, binds together with bS18 to 16S ribosomal RNA. This Borrelia garinii subsp. bavariensis (strain ATCC BAA-2496 / DSM 23469 / PBi) (Borreliella bavariensis) protein is Small ribosomal subunit protein bS6.